The following is a 144-amino-acid chain: Large ribosomal subunit protein uL11 (144 aa).

The protein belongs to the universal ribosomal protein uL11 family. In terms of assembly, part of the ribosomal stalk of the 50S ribosomal subunit. Interacts with L10 and the large rRNA to form the base of the stalk. L10 forms an elongated spine to which L12 dimers bind in a sequential fashion forming a multimeric L10(L12)X complex. One or more lysine residues are methylated.

In terms of biological role, forms part of the ribosomal stalk which helps the ribosome interact with GTP-bound translation factors. This Corynebacterium efficiens (strain DSM 44549 / YS-314 / AJ 12310 / JCM 11189 / NBRC 100395) protein is Large ribosomal subunit protein uL11.